Reading from the N-terminus, the 418-residue chain is Zinc metalloproteinase nas-8 (418 aa).

A signal peptide spans 1–28 (MMNRASLCRIAVLLCILHLSHLIDSTYA). Positions 29 to 100 (QSYLTEKDFL…TSKLKSGVRR (72 aa)) are excised as a propeptide. The 196-residue stretch at 101-296 (NGVTSVIKRW…LKINKLYNCP (196 aa)) folds into the Peptidase M12A domain. 5 disulfides stabilise this stretch: Cys143/Cys295, Cys165/Cys184, Cys347/Cys381, Cys354/Cys374, and Cys361/Cys378. Zn(2+) is bound at residue His192. Glu193 is a catalytic residue. Zn(2+) contacts are provided by His196 and His202. One can recognise a ShKT domain in the interval 347–381 (CSDRTNLCWRWLDRCRSYFFEKIMKEFCALSCGYC).

Zn(2+) is required as a cofactor.

The protein localises to the secreted. It carries out the reaction Hydrolysis of peptide bonds in substrates containing five or more amino acids, preferentially with Ala in P1', and Pro in P2'.. Inhibited by ethylene glycol-bis(2-aminoethylether)-N,N,N,N-tetraacetic acid (EGTA), ethylenediaminetetraacetic acid (EDTA) and o-phenanthroline. Its function is as follows. Metalloprotease. In Steinernema carpocapsae (Entomopathogenic nematode), this protein is Zinc metalloproteinase nas-8.